The sequence spans 276 residues: MANFKGHALPGSFFLIVGLWWSLKYPLKYFYQKEKSNQLTHHYQRLEIIEAAIRTLFAVIGILVEQFVPDGPHLHLYHEDHWVKLMNWQHSTMYLFFAVSGIMDMLTYLITHVPLGLDRLVMALAAFNEGFLFYYHVRDRPPLDQHIHSLLLYTVFGGALSLAVEVVLRDNIVLELFRTSLLLLQGTWFWQIGFVLFPPFGGPEWDQNSHDNIMFVTMCFCWHYLAALCILAASYSLVYCFLTRVKRPEDREVIGIQKLRSDHTYRKALLSGSDEE.

The next 6 membrane-spanning stretches (helical) occupy residues 7-27 (HALPGSFFLIVGLWWSLKYPL), 48-68 (IIEAAIRTLFAVIGILVEQFV), 95-115 (LFFAVSGIMDMLTYLITHVPL), 147-167 (IHSLLLYTVFGGALSLAVEVV), 181-201 (LLLLQGTWFWQIGFVLFPPFG), and 213-233 (IMFVTMCFCWHYLAALCILAA). Serine 271 and serine 273 each carry phosphoserine.

It belongs to the TMEM45 family.

It is found in the endosome membrane. The protein localises to the lysosome membrane. The protein resides in the golgi apparatus. Its subcellular location is the trans-Golgi network membrane. Plays a role in innate immunity. This is Transmembrane protein 45B (TMEM45B) from Bos taurus (Bovine).